A 459-amino-acid chain; its full sequence is Transmembrane protein 143 (459 aa).

A run of 2 helical transmembrane segments spans residues 280 to 300 (LLNL…GMVV) and 301 to 321 (LTDL…FMGL). Ser332 is subject to Phosphoserine. The disordered stretch occupies residues 435–459 (GFPKLDPVAPITSEPPQATPSSNIS). Polar residues predominate over residues 448–459 (EPPQATPSSNIS).

The protein localises to the membrane. The sequence is that of Transmembrane protein 143 (TMEM143) from Homo sapiens (Human).